Reading from the N-terminus, the 168-residue chain is Probable prefoldin subunit 5 (168 aa).

Belongs to the prefoldin subunit alpha family. In terms of assembly, heterohexamer of two PFD-alpha type and four PFD-beta type subunits.

Its function is as follows. Binds specifically to cytosolic chaperonin (c-CPN) and transfers target proteins to it. Binds to nascent polypeptide chain and promotes folding in an environment in which there are many competing pathways for nonnative proteins. This is Probable prefoldin subunit 5 from Drosophila melanogaster (Fruit fly).